A 178-amino-acid chain; its full sequence is High mobility group B protein 1 (178 aa).

Composition is skewed to basic and acidic residues over residues 1-52 and 101-118; these read MKTA…DPNK and APYE…EKQM. Disordered stretches follow at residues 1-59 and 75-178; these read MKTA…APSA and NPNV…EEED. Positions 53–122 form a DNA-binding region, HMG box; sequence PKRAPSAFFV…EYEKQMDAYN (70 aa). Phosphoserine is present on residues Ser137 and Ser146. Acidic residues predominate over residues 140–178; sequence NDEDEASGEEELLEKEAAGDDEEEEEEEDDDDDDDEEED.

Belongs to the HMGB family. In terms of tissue distribution, expressed in cotyledons, roots, stems, leaves and flowers (excluding pedicels).

It localises to the nucleus. In terms of biological role, binds preferentially double-stranded DNA. Modulates general plant growth and stress tolerance. Confers sensitivity to salt and genotoxic (methyl methanesulfonate, MMS) stresses. This is High mobility group B protein 1 (HMGB1) from Arabidopsis thaliana (Mouse-ear cress).